The sequence spans 184 residues: ATP-dependent protease subunit HslV (184 aa).

Thr-12 is a catalytic residue. Na(+) is bound by residues Ala-166, Cys-169, and Thr-172.

This sequence belongs to the peptidase T1B family. HslV subfamily. In terms of assembly, a double ring-shaped homohexamer of HslV is capped on each side by a ring-shaped HslU homohexamer. The assembly of the HslU/HslV complex is dependent on binding of ATP.

Its subcellular location is the cytoplasm. It carries out the reaction ATP-dependent cleavage of peptide bonds with broad specificity.. Its activity is regulated as follows. Allosterically activated by HslU binding. Functionally, protease subunit of a proteasome-like degradation complex believed to be a general protein degrading machinery. The sequence is that of ATP-dependent protease subunit HslV from Brucella anthropi (strain ATCC 49188 / DSM 6882 / CCUG 24695 / JCM 21032 / LMG 3331 / NBRC 15819 / NCTC 12168 / Alc 37) (Ochrobactrum anthropi).